Consider the following 319-residue polypeptide: Cutinase cut1 (319 aa).

Residues 1–58 (MPPHAARPGPAQNRRGRAMAVITPRRERSSLLSRALRFTAAAATALVTAVSLAAPAHA) form the signal peptide. Poly(ethylene terephthalate) is bound at residue tyrosine 118. The Nucleophile role is filled by serine 188. Positions 189 and 213 each coordinate poly(ethylene terephthalate). Active-site charge relay system residues include aspartate 234 and histidine 266. A disulfide bridge connects residues cysteine 299 and cysteine 317.

It belongs to the AB hydrolase superfamily.

Its subcellular location is the secreted. It is found in the periplasm. It carries out the reaction an acetyl ester + H2O = an aliphatic alcohol + acetate + H(+). The catalysed reaction is a butanoate ester + H2O = an aliphatic alcohol + butanoate + H(+). The enzyme catalyses pentanoate ester + H2O = pentanoate + an aliphatic alcohol + H(+). It catalyses the reaction an octanoate ester + H2O = an aliphatic alcohol + octanoate + H(+). It carries out the reaction decanoate ester + H2O = decanoate + an aliphatic alcohol + H(+). The catalysed reaction is a dodecanoate ester + H2O = an aliphatic alcohol + dodecanoate + H(+). The enzyme catalyses a tetradecanoate ester + H2O = an aliphatic alcohol + tetradecanoate + H(+). It catalyses the reaction hexadecanoate ester + H2O = an aliphatic alcohol + hexadecanoate + H(+). It carries out the reaction cutin + H2O = cutin monomers.. The catalysed reaction is (ethylene terephthalate)(n) + H2O = (ethylene terephthalate)(n-1) + 4-[(2-hydroxyethoxy)carbonyl]benzoate + H(+). Activated by magnesium ions. Activated by calcium ions. Its function is as follows. Catalyzes the hydrolysis of cutin, a polyester that forms the structure of plant cuticle. Shows esterase activity towards p-nitrophenol-linked aliphatic esters (pNP-aliphatic esters). Capable of degrading the plastic poly(ethylene terephthalate) (PET), the most abundant polyester plastic in the world. In Thermobifida fusca (Thermomonospora fusca), this protein is Cutinase cut1.